The sequence spans 517 residues: Perilipin-1 (517 aa).

Ser81 carries the phosphoserine modification. Position 85 is a phosphothreonine (Thr85). Ser126, Ser130, Ser132, Ser137, and Ser174 each carry phosphoserine. A disordered region spans residues 195–216 (DKESAPSSGRQRTQKAPKAKPS). Phosphothreonine occurs at positions 223, 298, and 300. Positions 286 to 320 (LAASQDESHDDQTDTEGEETDDEEEEEESEAEENV) are disordered. The required for interaction with CIDEC stretch occupies residues 290 to 321 (QDESHDDQTDTEGEETDDEEEEEESEAEENVL). Over residues 298-318 (TDTEGEETDDEEEEEESEAEE) the composition is skewed to acidic residues. Phosphoserine occurs at positions 314, 384, 386, 410, 433, 439, 460, 492, and 494. A disordered region spans residues 425 to 490 (SAEAERKGSG…AMPREKPARR (66 aa)).

It belongs to the perilipin family. As to quaternary structure, interacts with ABHD5. Interacts with CIDEC. Interacts with AQP7. Post-translationally, major cAMP-dependent protein kinase-substrate in adipocytes, also dephosphorylated by PP1. When phosphorylated, may be maximally sensitive to HSL and when unphosphorylated, may play a role in the inhibition of lipolysis, by acting as a barrier in lipid droplet.

It is found in the endoplasmic reticulum. It localises to the lipid droplet. In terms of biological role, modulator of adipocyte lipid metabolism. Coats lipid storage droplets to protect them from breakdown by hormone-sensitive lipase (HSL). Its absence may result in leanness. Plays a role in unilocular lipid droplet formation by activating CIDEC. Their interaction promotes lipid droplet enlargement and directional net neutral lipid transfer. May modulate lipolysis and triglyceride levels. In Mus musculus (Mouse), this protein is Perilipin-1 (Plin1).